We begin with the raw amino-acid sequence, 192 residues long: 3-isopropylmalate dehydratase small subunit (192 aa).

Belongs to the LeuD family. LeuD type 1 subfamily. In terms of assembly, heterodimer of LeuC and LeuD.

It carries out the reaction (2R,3S)-3-isopropylmalate = (2S)-2-isopropylmalate. It functions in the pathway amino-acid biosynthesis; L-leucine biosynthesis; L-leucine from 3-methyl-2-oxobutanoate: step 2/4. In terms of biological role, catalyzes the isomerization between 2-isopropylmalate and 3-isopropylmalate, via the formation of 2-isopropylmaleate. The chain is 3-isopropylmalate dehydratase small subunit from Oceanobacillus iheyensis (strain DSM 14371 / CIP 107618 / JCM 11309 / KCTC 3954 / HTE831).